A 382-amino-acid polypeptide reads, in one-letter code: Lactosylceramide 1,3-N-acetyl-beta-D-glucosaminyltransferase B (382 aa).

Residues M1–H13 lie on the Cytoplasmic side of the membrane. Residues L14–W30 traverse the membrane as a helical; Signal-anchor for type II membrane protein segment. The Lumenal portion of the chain corresponds to E31 to T382. N57, N112, N167, and N276 each carry an N-linked (GlcNAc...) asparagine glycan.

This sequence belongs to the glycosyltransferase 31 family.

It is found in the golgi apparatus membrane. The catalysed reaction is a beta-D-Gal-(1-&gt;4)-beta-D-Glc-(1&lt;-&gt;1)-Cer(d18:1(4E)) + UDP-N-acetyl-alpha-D-glucosamine = a beta-D-GlcNAc-(1-&gt;3)-beta-D-Gal-(1-&gt;4)-beta-D-Glc-(1&lt;-&gt;1)-Cer(d18:1(4E)) + UDP + H(+). It catalyses the reaction a neolactoside nLc4Cer(d18:1(4E)) + UDP-N-acetyl-alpha-D-glucosamine = a neolactoside IV(3)-beta-GlcNAc-nLc4Cer(d18:1(4E)) + UDP + H(+). It functions in the pathway protein modification; protein glycosylation. In terms of biological role, beta-1,3-N-acetylglucosaminyltransferase that plays a key role in the synthesis of lacto- or neolacto-series carbohydrate chains on glycolipids. This Danio rerio (Zebrafish) protein is Lactosylceramide 1,3-N-acetyl-beta-D-glucosaminyltransferase B (b3gnt5b).